The following is a 253-amino-acid chain: Sulfate transporter CysZ (253 aa).

Helical transmembrane passes span 31-51 (FVIL…WWLF), 75-95 (LLWP…FSTI), 151-171 (IVLL…PVLW), and 222-242 (IPLL…AMWV).

Belongs to the CysZ family.

Its subcellular location is the cell inner membrane. Functionally, high affinity, high specificity proton-dependent sulfate transporter, which mediates sulfate uptake. Provides the sulfur source for the cysteine synthesis pathway. In Shigella dysenteriae serotype 1 (strain Sd197), this protein is Sulfate transporter CysZ.